The chain runs to 132 residues: Dormancy-associated protein 1 (132 aa).

The tract at residues 53–76 (MPAAVSPGTPTTPTTPTTPRKDNV) is disordered. Residues 61–70 (TPTTPTTPTT) show a composition bias toward low complexity. T64 carries the phosphothreonine modification.

The protein belongs to the DRM1/ARP family. As to expression, isoform 1: Expressed mainly in the low bolt. Isoform 2: Expressed mainly in the low bolt. Detected in flowers. Isoform 4: Expressed mainly in the low bolt. Isoform 5: Expressed mainly in the 6 days old seedlings. Detected in 16 days old seedlings, axil, low bolt and floral samples, but only barely in leaves and top bolt.

The protein is Dormancy-associated protein 1 of Arabidopsis thaliana (Mouse-ear cress).